Consider the following 284-residue polypeptide: Hypoxanthine-guanine phosphoribosyltransferase (284 aa).

GMP-binding positions include Lys129, 194–202, Lys226, and Asp253; that span reads EDIIDTGKT. Asp198 functions as the Proton acceptor in the catalytic mechanism. Asp253 contributes to the Mg(2+) binding site.

This sequence belongs to the purine/pyrimidine phosphoribosyltransferase family. In terms of assembly, homotetramer. The cofactor is Mg(2+).

It localises to the cytoplasm. It catalyses the reaction IMP + diphosphate = hypoxanthine + 5-phospho-alpha-D-ribose 1-diphosphate. The catalysed reaction is GMP + diphosphate = guanine + 5-phospho-alpha-D-ribose 1-diphosphate. The protein operates within purine metabolism; IMP biosynthesis via salvage pathway; IMP from hypoxanthine: step 1/1. Functionally, converts guanine to guanosine monophosphate, and hypoxanthine to inosine monophosphate. Transfers the 5-phosphoribosyl group from 5-phosphoribosylpyrophosphate onto the purine. Plays a central role in the generation of purine nucleotides through the purine salvage pathway. The protein is Hypoxanthine-guanine phosphoribosyltransferase (HGPRT) of Schistosoma mansoni (Blood fluke).